We begin with the raw amino-acid sequence, 644 residues long: Tripeptidyl-peptidase sed1 (644 aa).

A signal peptide spans 1–18 (MRLSHVLLGTAAAAGVLA). Residues 19–196 (SPTPNDYVVH…KARSIEKRSF (178 aa)) constitute a propeptide, removed in mature form. Residues 224 to 643 (AITPLCISAL…PALLDLFMSL (420 aa)) enclose the Peptidase S53 domain. Asparagine 235 is a glycosylation site (N-linked (GlcNAc...) asparagine). Active-site charge relay system residues include glutamate 300 and aspartate 304. Residues asparagine 326, asparagine 332, and asparagine 519 are each glycosylated (N-linked (GlcNAc...) asparagine). The active-site Charge relay system is serine 561. Ca(2+)-binding residues include aspartate 602, isoleucine 603, glycine 621, and aspartate 623.

Requires Ca(2+) as cofactor. Post-translationally, N-glycosylated.

It localises to the secreted. The protein resides in the extracellular space. The enzyme catalyses Release of an N-terminal tripeptide from a polypeptide.. Secreted tripeptidyl-peptidase which degrades proteins at acidic pHs and is involved in virulence. The chain is Tripeptidyl-peptidase sed1 (sed1) from Aspergillus fumigatus (strain ATCC MYA-4609 / CBS 101355 / FGSC A1100 / Af293) (Neosartorya fumigata).